Reading from the N-terminus, the 125-residue chain is Small ribosomal subunit protein bS6 (125 aa).

The segment at Pro99–Gln125 is disordered. Residues Ser105–Ser115 are compositionally biased toward basic and acidic residues. Over residues Thr116–Gln125 the composition is skewed to polar residues.

It belongs to the bacterial ribosomal protein bS6 family.

Functionally, binds together with bS18 to 16S ribosomal RNA. The chain is Small ribosomal subunit protein bS6 from Bordetella petrii (strain ATCC BAA-461 / DSM 12804 / CCUG 43448).